A 554-amino-acid polypeptide reads, in one-letter code: Glucose-6-phosphate isomerase (554 aa).

E358 acts as the Proton donor in catalysis. Catalysis depends on residues H389 and K515. Polar residues predominate over residues A527–D540. A disordered region spans residues A527–S554. Basic and acidic residues predominate over residues L542–S554.

The protein belongs to the GPI family.

Its subcellular location is the cytoplasm. The enzyme catalyses alpha-D-glucose 6-phosphate = beta-D-fructose 6-phosphate. Its pathway is carbohydrate biosynthesis; gluconeogenesis. It functions in the pathway carbohydrate degradation; glycolysis; D-glyceraldehyde 3-phosphate and glycerone phosphate from D-glucose: step 2/4. In terms of biological role, catalyzes the reversible isomerization of glucose-6-phosphate to fructose-6-phosphate. This chain is Glucose-6-phosphate isomerase, found in Mycolicibacterium paratuberculosis (strain ATCC BAA-968 / K-10) (Mycobacterium paratuberculosis).